The following is a 401-amino-acid chain: MNYDRILIRYGEMTTKGKNRNIFVRRLKNNIARKLQAFERIQIEYMRDRMYILLNGEPHEPIIEKLKTVFGIHSFSLAMKCENDLDAIKETALAAVRQLPYKGKTFKVSARRVDKQFPYRSDELNYEVGAHILRQTDGLRVNVREPDIDVRIEVRQDGTYVTCRDIFGAGGLPVGTSGKAMLMLSGGIDSPVAGYLAMKRGLEIEAVHFFSPPFTSERAKQKVIDLVRKLTTYGGRIKLHIVPFTEVQQAIYQGVPNEYSLISTRRAMLRITDALRRRQRALAIVTGESLGQVASQTLESMYVINEVTNTPILRPLVSMDKLEIIELAKQIGTHDISILPYEDCCTIFTPRAPKTKPKKEKVFHYESQLDLAPLLEKAVNDTETLVIDEETGQGDEFAELF.

The THUMP domain maps to 60–165 (EPIIEKLKTV…QDGTYVTCRD (106 aa)). ATP is bound by residues 183–184 (ML), 208–209 (HF), R265, G287, and Q296.

This sequence belongs to the ThiI family.

It is found in the cytoplasm. The enzyme catalyses [ThiI sulfur-carrier protein]-S-sulfanyl-L-cysteine + a uridine in tRNA + 2 reduced [2Fe-2S]-[ferredoxin] + ATP + H(+) = [ThiI sulfur-carrier protein]-L-cysteine + a 4-thiouridine in tRNA + 2 oxidized [2Fe-2S]-[ferredoxin] + AMP + diphosphate. The catalysed reaction is [ThiS sulfur-carrier protein]-C-terminal Gly-Gly-AMP + S-sulfanyl-L-cysteinyl-[cysteine desulfurase] + AH2 = [ThiS sulfur-carrier protein]-C-terminal-Gly-aminoethanethioate + L-cysteinyl-[cysteine desulfurase] + A + AMP + 2 H(+). It participates in cofactor biosynthesis; thiamine diphosphate biosynthesis. Functionally, catalyzes the ATP-dependent transfer of a sulfur to tRNA to produce 4-thiouridine in position 8 of tRNAs, which functions as a near-UV photosensor. Also catalyzes the transfer of sulfur to the sulfur carrier protein ThiS, forming ThiS-thiocarboxylate. This is a step in the synthesis of thiazole, in the thiamine biosynthesis pathway. The sulfur is donated as persulfide by IscS. This Geobacillus kaustophilus (strain HTA426) protein is Probable tRNA sulfurtransferase.